Here is a 454-residue protein sequence, read N- to C-terminus: L-cysteine desulfhydrase (454 aa).

The tract at residues 1-25 (MEAGERRNGDSMSHNHRAPKKPRLA) is disordered. Over residues 14–23 (HNHRAPKKPR) the composition is skewed to basic residues. Lys-257 bears the N6-(pyridoxal phosphate)lysine mark.

This sequence belongs to the class-V pyridoxal-phosphate-dependent aminotransferase family. Pyridoxal 5'-phosphate is required as a cofactor. Highly expressed in stems and cauline leaves, and at lower levels in roots, rosette leaves and flowers.

It carries out the reaction L-cysteine + H2O = hydrogen sulfide + pyruvate + NH4(+) + H(+). Catalyzes the production of hydrogen sulfide (H2S) from cysteine. Is mainly responsible for the degradation of cysteine to generate H2S, a regulator of stomatal movement and closure. The polypeptide is L-cysteine desulfhydrase (LCD) (Arabidopsis thaliana (Mouse-ear cress)).